We begin with the raw amino-acid sequence, 480 residues long: Ochratoxinase (480 aa).

Residues His111, His113, Lys246, His287, and His307 each coordinate Zn(2+). Lys246 is a catalytic residue. Asp378 is an active-site residue.

It belongs to the metallo-dependent hydrolases superfamily. Ochratoxinase amidase 2 family. Homooctamer. The cofactor is Zn(2+).

Its subcellular location is the secreted. The enzyme catalyses ochratoxin A + H2O = ochratoxin alpha + L-phenylalanine. Its activity is regulated as follows. The Zn(2+)-specific chelator 1,10-phenanthroline inhibits the enzyme activity. Carboxypeptidase that catalyzes the release of a C-terminal amino acid with specific catalytic activity for aromatic amino acids such as phenylalanine. Is able to degrade ochratoxin A, one of the five major mycotoxins most harmful to humans and animals that is produced by Aspergillus and Penicillium species and occurs in a wide range of agricultural products. This is Ochratoxinase from Aspergillus niger (strain ATCC 1015 / CBS 113.46 / FGSC A1144 / LSHB Ac4 / NCTC 3858a / NRRL 328 / USDA 3528.7).